The primary structure comprises 725 residues: D-(-)-3-hydroxybutyrate oligomer hydrolase (725 aa).

A signal peptide spans 1 to 22 (MNTTRDANRLRQRASLSGLALA). Catalysis depends on S322, which acts as the Charge relay system.

Belongs to the D-(-)-3-hydroxybutyrate oligomer hydrolase family.

It is found in the secreted. The enzyme catalyses (3R)-hydroxybutanoate dimer + H2O = 2 (R)-3-hydroxybutanoate + H(+). The protein operates within lipid metabolism; butanoate metabolism. Functionally, participates in the degradation of poly-3-hydroxybutyrate (PHB). It works downstream of poly(3-hydroxybutyrate) depolymerase, hydrolyzing D(-)-3-hydroxybutyrate oligomers of various length (3HB-oligomers) into 3HB-monomers. This chain is D-(-)-3-hydroxybutyrate oligomer hydrolase, found in Ralstonia nicotianae (strain ATCC BAA-1114 / GMI1000) (Ralstonia solanacearum).